The following is a 231-amino-acid chain: MAKLTKKQKALQGKVDSTKLYAFADAVVLVKEAATAKFDESIDVAVQLGIDAKKSDQVVRGAVVLPNGTGKTTRVAVFAQGAKAEEAKAAGADVVGMDDLAAQVKAGDMPFDVVIAAPDAMRVVGTLGQILGPRGLMPNPKVGTVTPDVATAVKNAKAGQVQFRVDKAGIIHSTIGRRSFDNDKLQGNLVALIEALNKAKPATSKGLYLRKVAVSSTMGVGVRVDTQSISA.

The protein belongs to the universal ribosomal protein uL1 family. Part of the 50S ribosomal subunit.

Functionally, binds directly to 23S rRNA. The L1 stalk is quite mobile in the ribosome, and is involved in E site tRNA release. Protein L1 is also a translational repressor protein, it controls the translation of the L11 operon by binding to its mRNA. This is Large ribosomal subunit protein uL1 from Paracidovorax citrulli (strain AAC00-1) (Acidovorax citrulli).